Consider the following 335-residue polypeptide: Pyridoxal 5'-phosphate synthase subunit PdxS (335 aa).

Aspartate 59 contacts D-ribose 5-phosphate. Lysine 116 acts as the Schiff-base intermediate with D-ribose 5-phosphate in catalysis. Residue glycine 188 participates in D-ribose 5-phosphate binding. Lysine 200 is a binding site for D-glyceraldehyde 3-phosphate. D-ribose 5-phosphate-binding positions include glycine 253 and 274–275; that span reads GS.

The protein belongs to the PdxS/SNZ family. In the presence of PdxT, forms a dodecamer of heterodimers.

It catalyses the reaction aldehydo-D-ribose 5-phosphate + D-glyceraldehyde 3-phosphate + L-glutamine = pyridoxal 5'-phosphate + L-glutamate + phosphate + 3 H2O + H(+). It functions in the pathway cofactor biosynthesis; pyridoxal 5'-phosphate biosynthesis. Catalyzes the formation of pyridoxal 5'-phosphate from ribose 5-phosphate (RBP), glyceraldehyde 3-phosphate (G3P) and ammonia. The ammonia is provided by the PdxT subunit. Can also use ribulose 5-phosphate and dihydroxyacetone phosphate as substrates, resulting from enzyme-catalyzed isomerization of RBP and G3P, respectively. In Desulfurococcus amylolyticus (strain DSM 18924 / JCM 16383 / VKM B-2413 / 1221n) (Desulfurococcus kamchatkensis), this protein is Pyridoxal 5'-phosphate synthase subunit PdxS.